The primary structure comprises 284 residues: Protease HtpX (284 aa).

Helical transmembrane passes span 4-24 and 33-53; these read ILLF…ILSL and MGLL…SLLM. A Zn(2+)-binding site is contributed by H139. The active site involves E140. H143 lines the Zn(2+) pocket. 2 consecutive transmembrane segments (helical) span residues 147 to 167 and 187 to 207; these read GDMV…IFAA and IYFL…SMIA. E215 is a Zn(2+) binding site.

The protein belongs to the peptidase M48B family. Requires Zn(2+) as cofactor.

The protein resides in the cell inner membrane. The sequence is that of Protease HtpX from Mannheimia succiniciproducens (strain KCTC 0769BP / MBEL55E).